Consider the following 485-residue polypeptide: Amino acid permease 1 (485 aa).

The segment covering methionine 1–glutamate 15 has biased composition (polar residues). Residues methionine 1 to glutamate 35 form a disordered region. Residues methionine 1–threonine 40 lie on the Cytoplasmic side of the membrane. The next 2 membrane-spanning stretches (helical) occupy residues tryptophan 41–alanine 61 and tryptophan 62–isoleucine 82. The Cytoplasmic portion of the chain corresponds to threonine 83–tyrosine 129. The chain crosses the membrane as a helical span at residues glycine 130–valine 150. The Extracellular portion of the chain corresponds to glycine 151–threonine 166. Residues isoleucine 167–proline 187 traverse the membrane as a helical segment. The Cytoplasmic portion of the chain corresponds to asparagine 188–phenylalanine 194. The helical transmembrane segment at leucine 195 to isoleucine 215 threads the bilayer. At alanine 216–arginine 245 the chain is on the extracellular side. The chain crosses the membrane as a helical span at residues serine 246–isoleucine 266. Topologically, residues glutamine 267 to leucine 285 are cytoplasmic. Residues valine 286–phenylalanine 306 form a helical membrane-spanning segment. Topologically, residues glycine 307 to phenylalanine 318 are extracellular. A helical transmembrane segment spans residues glycine 319 to isoleucine 339. Over glycine 340–tyrosine 394 the chain is Cytoplasmic. The next 2 helical transmembrane spans lie at valine 395–isoleucine 415 and glycine 416–threonine 436. Over lysine 437–threonine 450 the chain is Cytoplasmic. A helical transmembrane segment spans residues methionine 451–isoleucine 471. At serine 472–glutamate 485 the chain is on the extracellular side.

The protein belongs to the amino acid/polyamine transporter 2 family. Amino acid/auxin permease (AAAP) (TC 2.A.18.2) subfamily. Highly expressed in developing pods. Found in the endosperm and in the storage parenchyma and the outer epidermis cells of the developing embryo. Lower levels of expression in flowers, in the vascular system of the cotyledon and in the root epidermal cells, including root hairs and throughout the root tip.

Its subcellular location is the cell membrane. Its activity is regulated as follows. Inhibited by carbonylcyanide m-chlorophenylhydrazone and diethylpyrocarbonate (DEPC). Amino acid-proton symporter. Stereospecific transporter with a broad specificity for histidine, glutamate and neutral amino acids. Reduced affinities for asparagine and valine. Involved in amino acid uptake from the apoplastic cavity into the embryo cells for storage protein accumulation and in root amino acid uptake. This chain is Amino acid permease 1 (AAP1), found in Arabidopsis thaliana (Mouse-ear cress).